Consider the following 306-residue polypeptide: Glutaminase (306 aa).

Residues S64, N115, E159, N166, Y190, Y242, and V260 each contribute to the substrate site.

It belongs to the glutaminase family. As to quaternary structure, homotetramer.

The catalysed reaction is L-glutamine + H2O = L-glutamate + NH4(+). The chain is Glutaminase from Photobacterium profundum (strain SS9).